The chain runs to 525 residues: MLECLSALLVLFAGGGGSVLAAVQSKTVADPNLCPGYNSQLISPFLSSCKRNLSECVSRYFDEQYAFCRSCVTVNNETMEDLDNCKCLQCALSSLNNSCFHDYCTSKDEYDKLQIVVEQFQLTNGVLDDGEILKPRGNKFSSRKLSYFVGQNNTLFRNPLQFEKNQLISALLTSLTNNQKTISSVDMFEVVDANNEVQYLRERTISGKTLSPATGYEEENDGDCSVKDKKWEGKIEYHENKKVSSENCSKDTDDKSGSKKERNTKAPLFHTATEIHMTRWSSWRPKKIFTRYLVNEYQSPKIITTVNRFYRTKTDTETGTTLITSTKAKRRWFPRTKIVTSTATSTFLSITTTTTTNAIATKSLVAVLNPDGLNKKAGINFGLFSANGELASPDEGGTPTVVRRDKISDPGAANEQATLFSTTFSQVPHLPELDSGEFISAASQLDERIFIFTAITVSITTLMMLGFSYRSRVSFRDHSIDDSDDDNDWSDDEVEFDEEYFYSLPVSIPEKGISLDKMAQQLGVE.

An N-terminal signal peptide occupies residues 1 to 21 (MLECLSALLVLFAGGGGSVLA). The Extracellular portion of the chain corresponds to 22–448 (AVQSKTVADP…ISAASQLDER (427 aa)). Residues 242–264 (KVSSENCSKDTDDKSGSKKERNT) are disordered. A helical transmembrane segment spans residues 449-469 (IFIFTAITVSITTLMMLGFSY). At 470–525 (RSRVSFRDHSIDDSDDDNDWSDDEVEFDEEYFYSLPVSIPEKGISLDKMAQQLGVE) the chain is on the cytoplasmic side.

It is found in the membrane. This is an uncharacterized protein from Saccharomyces cerevisiae (strain RM11-1a) (Baker's yeast).